Reading from the N-terminus, the 528-residue chain is Protein arginine N-methyltransferase 3 (528 aa).

The segment at 1–43 (MCSLAAGNGRGAELGPEPLELSDSGDDAGWEDEDADTEPAHGR) is disordered. An N-acetylcysteine modification is found at Cys-2. A phosphoserine mark is found at Ser-22 and Ser-24. Over residues 23 to 37 (DSGDDAGWEDEDADT) the composition is skewed to acidic residues. The C2H2-type zinc-finger motif lies at 46–69 (TPCLFCDRLFASAEETFSHCKLEH). Ser-169 is modified (phosphoserine). A mediates interaction with ALDH1A1 region spans residues 184-528 (MKQFAQDFVM…NSSTQTYSLQ (345 aa)). An SAM-dependent MTase PRMT-type domain is found at 214 to 528 (DGVYFSSYGH…NSSTQTYSLQ (315 aa)). 6 residues coordinate S-adenosyl-L-homocysteine: Arg-236, Gly-260, Asp-282, Ser-284, Ile-310, and Glu-311. Catalysis depends on residues Glu-326 and Glu-335.

This sequence belongs to the class I-like SAM-binding methyltransferase superfamily. Protein arginine N-methyltransferase family. As to quaternary structure, monomer and homodimer. Interacts with EPB41L3 (via FERM domain); the interaction is direct and inhibits the protein-arginine N-methyltransferase activity of PRMT3. Interacts with the 40S ribosomal protein RPS2. Interacts with ALDH1A1; the interaction is direct, inhibits ALDH1A1 aldehyde dehydrogenase activity and is independent of the methyltransferase activity of PRMT3.

The protein resides in the cytoplasm. Its subcellular location is the cytosol. The protein localises to the nucleus. It catalyses the reaction L-arginyl-[protein] + S-adenosyl-L-methionine = N(omega)-methyl-L-arginyl-[protein] + S-adenosyl-L-homocysteine + H(+). The catalysed reaction is L-arginyl-[protein] + 2 S-adenosyl-L-methionine = N(omega),N(omega)-dimethyl-L-arginyl-[protein] + 2 S-adenosyl-L-homocysteine + 2 H(+). Inhibited by N-ethylmaleimide and high concentrations of zinc chloride. Its function is as follows. Protein-arginine N-methyltransferase that catalyzes both the monomethylation and asymmetric dimethylation of the guanidino nitrogens of arginine residues in target proteins, and therefore falls into the group of type I methyltransferases. Catalyzes the asymmetric arginine dimethylation at multiple sites in the Arg/Gly-rich region of small ribosomal subunit protein uS5/RPS2. Also appears to methylate other ribosomal proteins. May regulate retinoic acid synthesis and signaling by inhibiting ALDH1A1 retinal dehydrogenase activity. Contributes to methylation of histone H4 'Arg-3', a specific tag for epigenetic transcriptional activation. Promotes osteogenesis. The chain is Protein arginine N-methyltransferase 3 from Mus musculus (Mouse).